The following is a 270-amino-acid chain: uncharacterized protein (270 aa).

An N-terminal signal peptide occupies residues 1–23 (MKKLLIILAATLVLVLGSSGNFR).

This is an uncharacterized protein from Archaeoglobus fulgidus (strain ATCC 49558 / DSM 4304 / JCM 9628 / NBRC 100126 / VC-16).